Here is a 773-residue protein sequence, read N- to C-terminus: DNA gyrase subunit B (773 aa).

The region spanning 416–530 is the Toprim domain; the sequence is SEIFLVEGDS…QGHVYIAQAP (115 aa). Positions 422, 495, and 497 each coordinate Mg(2+).

This sequence belongs to the type II topoisomerase GyrB family. In terms of assembly, heterotetramer, composed of two GyrA and two GyrB chains. In the heterotetramer, GyrA contains the active site tyrosine that forms a transient covalent intermediate with DNA, while GyrB binds cofactors and catalyzes ATP hydrolysis. Mg(2+) serves as cofactor. Mn(2+) is required as a cofactor. It depends on Ca(2+) as a cofactor.

The protein resides in the cytoplasm. It catalyses the reaction ATP-dependent breakage, passage and rejoining of double-stranded DNA.. Functionally, a type II topoisomerase that negatively supercoils closed circular double-stranded (ds) DNA in an ATP-dependent manner to modulate DNA topology and maintain chromosomes in an underwound state. Negative supercoiling favors strand separation, and DNA replication, transcription, recombination and repair, all of which involve strand separation. Also able to catalyze the interconversion of other topological isomers of dsDNA rings, including catenanes and knotted rings. Type II topoisomerases break and join 2 DNA strands simultaneously in an ATP-dependent manner. This chain is DNA gyrase subunit B, found in Helicobacter pylori (strain ATCC 700392 / 26695) (Campylobacter pylori).